The primary structure comprises 372 residues: MEKNRSAFQQNQQASNQPFNQDQNQYYQDPNQQQFNQSGFDPNQQQFNQPGFDPNQQYYQDPNQQQFNQAGFDQNQQYYQDPNQQQFNQPGFDPNQQYYQDPNQQQFNQAGFDQNQYYQDPNQQQFNQSGFDQNQYYQDPNQQQFNQPSFDLNNQQFNQPGFNQSPAFEITPQEQKAEQEMFGEEPPQVVREIHELPFEKIRSFLQSDFDSYNFRLNSLKSKLDNALYSLDKTIQNTNENTANLEAIRHNLEQKIQNQSKQLRTNFDTQKLDDKINELEIRMQKLTRNFESLSELSKHNSYPNYYEKLLPNGGDSMTNVFEKALMMNLLRTTLPPQPQVQYYPQPYPYIRPYYDEPIYAGFRRRGYRDDFYE.

The span at 1–37 (MEKNRSAFQQNQQASNQPFNQDQNQYYQDPNQQQFNQ) shows a compositional bias: low complexity. Residues 1-100 (MEKNRSAFQQ…GFDPNQQYYQ (100 aa)) are disordered. Tandem repeats lie at residues 29-40 (DPNQQQFNQSGF), 41-52 (DPNQQQFNQPGF), 53-60 (DPNQQYYQ), 61-72 (DPNQQQFNQAGF), 73-80 (DQNQQYYQ), 81-92 (DPNQQQFNQPGF), 93-100 (DPNQQYYQ), 101-112 (DPNQQQFNQAGF), 113-119 (DQNQYYQ), 120-131 (DPNQQQFNQSGF), 132-138 (DQNQYYQ), 139-150 (DPNQQQFNQPSF), and 151-162 (DLNNQQFNQPGF). Residues 38 to 49 (SGFDPNQQQFNQ) are compositionally biased toward polar residues. A compositionally biased stretch (low complexity) spans 53–100 (DPNQQYYQDPNQQQFNQAGFDQNQQYYQDPNQQQFNQPGFDPNQQYYQ). The disordered stretch occupies residues 122–150 (NQQQFNQSGFDQNQYYQDPNQQQFNQPSF).

In Mycoplasma genitalium (strain ATCC 33530 / DSM 19775 / NCTC 10195 / G37) (Mycoplasmoides genitalium), this protein is Proline-rich P65 protein homolog.